Reading from the N-terminus, the 88-residue chain is Putative regulatory protein DvMF_1139 (88 aa).

The protein belongs to the RemA family.

The protein is Putative regulatory protein DvMF_1139 of Nitratidesulfovibrio vulgaris (strain DSM 19637 / Miyazaki F) (Desulfovibrio vulgaris).